Reading from the N-terminus, the 314-residue chain is Methenyltetrahydromethanopterin cyclohydrolase (314 aa).

The protein belongs to the MCH family.

Its subcellular location is the cytoplasm. It carries out the reaction 5,10-methenyl-5,6,7,8-tetrahydromethanopterin + H2O = N(5)-formyl-5,6,7,8-tetrahydromethanopterin + H(+). It functions in the pathway one-carbon metabolism; methanogenesis from CO(2); 5,10-methenyl-5,6,7,8-tetrahydromethanopterin from CO(2): step 3/3. Its function is as follows. Catalyzes the reversible interconversion of 5-formyl-H(4)MPT to methenyl-H(4)MPT(+). This chain is Methenyltetrahydromethanopterin cyclohydrolase, found in Methanocorpusculum labreanum (strain ATCC 43576 / DSM 4855 / Z).